Consider the following 1773-residue polypeptide: ATP-binding cassette sub-family A member 17 (1773 aa).

The next 3 helical transmembrane spans lie at 22–42 (TLVTVLETLMPVLFSAIVLYL), 262–282 (FPLLLMLSFICVELIITNSIL), and 306–326 (AWFITFFLSALVTVSGMTVLF). A glycan (N-linked (GlcNAc...) asparagine) is linked at asparagine 340. 4 consecutive transmembrane segments (helical) span residues 342–362 (TLIFIFLMCFAIATIFFAFMM), 372–392 (GTVIGGIVFFFTYLPYMYITF), 403–423 (ILSCLFSNVAMAMGVRFISLF), and 444–464 (FTQVLVMLLLDSFLYCLVAFL). The ABC transporter 1 domain maps to 525 to 758 (IEIQHLYKVF…YGAGYYMTII (234 aa)). Residue 561 to 568 (GHNGAGKT) participates in ATP binding. Residue asparagine 615 is glycosylated (N-linked (GlcNAc...) asparagine). Helical transmembrane passes span 912 to 932 (LVLSVQILLPLVIIMLSLSFF), 1088 to 1108 (LVVNFLFGIAFLSSSFSILTV), 1134 to 1154 (LLWDLISFLVPTLLLVLVFFW), 1166 to 1186 (IPAVVLIMMLYGWAIIPLVYT), 1198 to 1218 (CVKLVAMLTFLSISPVVLVTV), 1236 to 1256 (IFLIFPGHCLGMAFSNLYYNF), and 1293 to 1313 (IGKYLTALAILGPVYITLLFL). N-linked (GlcNAc...) asparagine glycosylation occurs at asparagine 1340. The region spanning 1369–1602 (LVVKELSKVY…FGSGYSLQAK (234 aa)) is the ABC transporter 2 domain. 1404 to 1411 (GLNGAGKT) lines the ATP pocket. Residues 1690–1773 (NIQQGQAALD…SQPPSEPVLL (84 aa)) are disordered. A compositionally biased stretch (low complexity) spans 1700–1710 (SSLSPSNSRPI). Pro residues-rich tracts occupy residues 1711 to 1740 (SSPPSSPPSSPPSSPPSRPPSRPSQPPSRP) and 1763 to 1773 (PSQPPSEPVLL).

It belongs to the ABC transporter superfamily. ABCA family. In terms of processing, N-glycosylated.

The protein resides in the endoplasmic reticulum membrane. Its subcellular location is the cytoplasm. It carries out the reaction cholesterol(in) + ATP + H2O = cholesterol(out) + ADP + phosphate + H(+). Promotes cholesterol efflux from sperm which renders sperm capable of fertilization. Has also been shown to decrease levels of intracellular esterified neutral lipids including cholesteryl esters, fatty acid esters and triacylglycerols. The sequence is that of ATP-binding cassette sub-family A member 17 from Rattus norvegicus (Rat).